The sequence spans 307 residues: Acetaldehyde dehydrogenase (307 aa).

12–15 (SGNI) is a binding site for NAD(+). The active-site Acyl-thioester intermediate is cysteine 130. Residues 161–169 (SVGPGTRQN) and asparagine 272 contribute to the NAD(+) site.

This sequence belongs to the acetaldehyde dehydrogenase family.

It catalyses the reaction acetaldehyde + NAD(+) + CoA = acetyl-CoA + NADH + H(+). The protein is Acetaldehyde dehydrogenase of Shewanella pealeana (strain ATCC 700345 / ANG-SQ1).